The primary structure comprises 476 residues: POC1 centriolar protein homolog B (476 aa).

WD repeat units follow at residues 16 to 55, 58 to 97, 100 to 139, 142 to 181, 183 to 223, 226 to 265, and 268 to 307; these read GHKAAITSADFSPNCKQIATASWDTFLMLWSLKPHARAYR, GHKDVVTSLQFSPQGNLLASASRDRTVRLWVLDRKGKSSE, AHTAPVRSVDFSADGQLLVTASEDKSIKVWSMFRQRFLYS, RHTHWVRCAKFSPDGRLIVSCSEDKTIKIWDTTNKQCVNN, SDSV…LLQH, VHSCGVNCLSFHPLGNSLVTASSDGTVKMLDLIEGRLIYT, and GHTGPVFTVSFSKDGELLTSGGADAQVLIWRTNFIHLHCK. Residues 429–468 adopt a coiled-coil conformation; sequence ALEHIMEQLNILTQTVSILEQRLSLTEDKLRDCLENQQKL.

The protein belongs to the WD repeat POC1 family. Interacts with POC1A. Interacts with FAM161A. Interacts with CEP44; the interaction is direct and recruits POC1B to centriolar microtubules. Forms a microtubule-associated complex with POC5, CETN2 and FAM161A. Interacts with CCDC15. Phosphorylated in mitotic cells that may be mediated by CDK1. Expressed in the retina.

It localises to the cytoplasm. Its subcellular location is the cytoskeleton. It is found in the microtubule organizing center. The protein localises to the centrosome. The protein resides in the centriole. It localises to the cilium basal body. Its subcellular location is the spindle pole. Functionally, plays an important role in centriole assembly and/or stability and ciliogenesis. Involved in early steps of centriole duplication, as well as in the later steps of centriole length control. Acts in concert with POC1A to ensure centriole integrity and proper mitotic spindle formation. Required for primary cilia formation, ciliary length and also cell proliferation. Required for retinal integrity. Acts as a positive regulator of centriole elongation. This chain is POC1 centriolar protein homolog B (Poc1b), found in Mus musculus (Mouse).